We begin with the raw amino-acid sequence, 59 residues long: UPF0339 protein CC_2965 (59 aa).

Belongs to the UPF0339 family.

In Caulobacter vibrioides (strain ATCC 19089 / CIP 103742 / CB 15) (Caulobacter crescentus), this protein is UPF0339 protein CC_2965.